Here is a 307-residue protein sequence, read N- to C-terminus: Ribosomal RNA small subunit methyltransferase H (307 aa).

S-adenosyl-L-methionine contacts are provided by residues 32–34 (GGH), D52, F78, D99, and Q106. The interval 287 to 307 (KEEIESNKRSHSAKLRVAEKV) is disordered.

Belongs to the methyltransferase superfamily. RsmH family.

It is found in the cytoplasm. It catalyses the reaction cytidine(1402) in 16S rRNA + S-adenosyl-L-methionine = N(4)-methylcytidine(1402) in 16S rRNA + S-adenosyl-L-homocysteine + H(+). Its function is as follows. Specifically methylates the N4 position of cytidine in position 1402 (C1402) of 16S rRNA. The chain is Ribosomal RNA small subunit methyltransferase H from Caldicellulosiruptor bescii (strain ATCC BAA-1888 / DSM 6725 / KCTC 15123 / Z-1320) (Anaerocellum thermophilum).